Here is a 327-residue protein sequence, read N- to C-terminus: Phenylalanine--tRNA ligase alpha subunit (327 aa).

A Mg(2+)-binding site is contributed by Glu252.

This sequence belongs to the class-II aminoacyl-tRNA synthetase family. Phe-tRNA synthetase alpha subunit type 1 subfamily. Tetramer of two alpha and two beta subunits. Requires Mg(2+) as cofactor.

It localises to the cytoplasm. It carries out the reaction tRNA(Phe) + L-phenylalanine + ATP = L-phenylalanyl-tRNA(Phe) + AMP + diphosphate + H(+). The sequence is that of Phenylalanine--tRNA ligase alpha subunit from Haemophilus ducreyi (strain 35000HP / ATCC 700724).